The following is a 695-amino-acid chain: D-(-)-3-hydroxybutyrate oligomer hydrolase (695 aa).

The first 17 residues, methionine 1 to alanine 17, serve as a signal peptide directing secretion. The Charge relay system role is filled by serine 308.

Belongs to the D-(-)-3-hydroxybutyrate oligomer hydrolase family.

It is found in the secreted. The catalysed reaction is (3R)-hydroxybutanoate dimer + H2O = 2 (R)-3-hydroxybutanoate + H(+). It participates in lipid metabolism; butanoate metabolism. Its function is as follows. Participates in the degradation of poly-3-hydroxybutyrate (PHB). It works downstream of poly(3-hydroxybutyrate) depolymerase, hydrolyzing D(-)-3-hydroxybutyrate oligomers of various length (3HB-oligomers) into 3HB-monomers. The sequence is that of D-(-)-3-hydroxybutyrate oligomer hydrolase from Burkholderia ambifaria (strain ATCC BAA-244 / DSM 16087 / CCUG 44356 / LMG 19182 / AMMD) (Burkholderia cepacia (strain AMMD)).